The sequence spans 314 residues: Regulator of microtubule dynamics protein 1 (314 aa).

Lys165 bears the N6-succinyllysine mark. TPR repeat units follow at residues 168 to 204 and 222 to 258; these read AICLSDVGDYEGIKAKIANAYIIKEHFEKAIELNPKD and PWYQRRIAKMLFATPPSSTYEKALGYFHRAEQVDPNF.

It belongs to the RMDN family. As to quaternary structure, interacts with microtubules.

The protein localises to the cytoplasm. Its subcellular location is the cytoskeleton. It is found in the spindle. The protein resides in the spindle pole. This Homo sapiens (Human) protein is Regulator of microtubule dynamics protein 1 (RMDN1).